Reading from the N-terminus, the 391-residue chain is Ectodysplasin-A (391 aa).

Residues 1–21 (MGYPEVERREPLPAAAPRERG) show a composition bias toward basic and acidic residues. Positions 1 to 28 (MGYPEVERREPLPAAAPRERGSQGCGCR) are disordered. Residues 1–41 (MGYPEVERREPLPAAAPRERGSQGCGCRGAPARAGEGNSCR) lie on the Cytoplasmic side of the membrane. A helical; Signal-anchor for type II membrane protein transmembrane segment spans residues 42–62 (LFLGFFGLSLALHLLTLCCYL). The Extracellular portion of the chain corresponds to 63-391 (ELRSELRRER…AIRLGEAPAS (329 aa)). Disordered stretches follow at residues 72 to 129 (RGTE…DSQD) and 146 to 244 (YSEE…TGTR). The span at 86–96 (TSGTLSSPGSL) shows a compositional bias: low complexity. The 50-residue stretch at 180–229 (GPPGPNGPPGPPGPPGPQGPPGIPGIPGIPGTTVMGPPGPPGPPGPQGPP) folds into the Collagen-like domain. Composition is skewed to pro residues over residues 181–203 (PPGP…PGIP) and 216–228 (PPGP…PQGP). In terms of domain architecture, THD spans 249-385 (AVVHLQGQGS…HTTFFGAIRL (137 aa)). Residue N313 is glycosylated (N-linked (GlcNAc...) asparagine). Cysteines 332 and 346 form a disulfide. The N-linked (GlcNAc...) asparagine glycan is linked to N372.

The protein belongs to the tumor necrosis factor family. Homotrimer. The homotrimers may then dimerize and form higher-order oligomers. In terms of processing, N-glycosylated. Processing by furin produces a secreted form.

The protein localises to the cell membrane. The protein resides in the secreted. Cytokine which is involved in epithelial-mesenchymal signaling during morphogenesis of ectodermal organs. Functions as a ligand activating the DEATH-domain containing receptors EDAR and EDA2R. Isoform TAA binds only to the receptor EDAR, while isoform TA-A2 binds exclusively to the receptor EDA2R. May also play a role in cell adhesion. Functionally, isoform TAA binds only to the receptor EDAR, while isoform TA-A2 binds exclusively to the receptor EDA2R. In terms of biological role, isoform TA-A2 binds exclusively to the receptor EDA2R. This chain is Ectodysplasin-A (Eda), found in Mus musculus (Mouse).